The chain runs to 576 residues: Threonine dehydratase, mitochondrial (576 aa).

Residue lysine 109 is modified to N6-(pyridoxal phosphate)lysine. 2 consecutive ACT-like domains span residues 393 to 473 (VFML…DISD) and 495 to 566 (RIIS…DETD).

This sequence belongs to the serine/threonine dehydratase family. In terms of assembly, homotetramer. It depends on pyridoxal 5'-phosphate as a cofactor.

Its subcellular location is the mitochondrion. It catalyses the reaction L-threonine = 2-oxobutanoate + NH4(+). Its pathway is amino-acid biosynthesis; L-isoleucine biosynthesis; 2-oxobutanoate from L-threonine: step 1/1. Isoleucine allosterically inhibits while valine allosterically activates this enzyme. This Saccharomyces cerevisiae (strain ATCC 204508 / S288c) (Baker's yeast) protein is Threonine dehydratase, mitochondrial (ILV1).